Consider the following 281-residue polypeptide: MSDVEENNFEGRESRSQSKSPTGTPARVKSESRSGSRSPSRVSKHSESHSRSRSKSRSRSRRHSHRRYTRSRSHSHRRRSRSRSYTPEYRRRRSRSHSPMSNRRRHTGSRANPDPNTCLGVFGLSLYTTERDLREVFSRYGPLSGVNVVYDQRTGRSRGFAFVYFERIDDSKEAMERANGMELDGRRIRVDYSITKRAHTPTPGIYMGRPTHSGGGGGGGGGGGGGGGGGGGRRRDSYYDRGYDRGYDRYEDYDYRRRSPSPYYSRYRSRSRSRSYSPRRY.

The segment at 1-116 (MSDVEENNFE…TGSRANPDPN (116 aa)) is disordered. Position 2 is an N-acetylserine (Ser-2). 2 positions are modified to phosphoserine: Ser-2 and Ser-14. At Thr-24 the chain carries Phosphothreonine. A compositionally biased stretch (basic residues) spans 51–82 (RSRSKSRSRSRRHSHRRYTRSRSHSHRRRSRS). Ser-80, Ser-82, and Ser-84 each carry phosphoserine. Position 86 is a phosphothreonine (Thr-86). Over residues 90 to 108 (RRRRSRSHSPMSNRRRHTG) the composition is skewed to basic residues. Residues Ser-94 and Ser-96 each carry the phosphoserine modification. An RRM domain is found at 117-195 (TCLGVFGLSL…RRIRVDYSIT (79 aa)). Lys-196 participates in a covalent cross-link: Glycyl lysine isopeptide (Lys-Gly) (interchain with G-Cter in SUMO2). The tract at residues 196–223 (KRAHTPTPGIYMGRPTHSGGGGGGGGGG) is linker. A disordered region spans residues 199-281 (HTPTPGIYMG…RSRSYSPRRY (83 aa)). Phosphothreonine is present on residues Thr-200 and Thr-202. A compositionally biased stretch (gly residues) spans 213 to 231 (SGGGGGGGGGGGGGGGGGG). Position 233 is an omega-N-methylarginine (Arg-233). The segment covering 233-257 (RRRDSYYDRGYDRGYDRYEDYDYRR) has biased composition (basic and acidic residues). Phosphoserine is present on Ser-237. The span at 267–281 (YRSRSRSRSYSPRRY) shows a compositional bias: basic residues.

It belongs to the splicing factor SR family. In terms of assembly, binds to A3 enhancer proteins SRp75, SRp55, SRp40 and SRp30. Interacts with ILDR1 (via C-terminus) and ILDR2. In terms of processing, phosphorylated in the RS domains. In terms of tissue distribution, expressed in inner ear.

Its subcellular location is the nucleus. In terms of biological role, sequence-specific RNA-binding protein which participates in the control of pre-mRNA splicing. The chain is Transformer-2 protein homolog alpha from Mus musculus (Mouse).